A 219-amino-acid polypeptide reads, in one-letter code: Thymidylate kinase (219 aa).

An ATP-binding site is contributed by 10–17 (GLEGAGKT).

Belongs to the thymidylate kinase family.

The enzyme catalyses dTMP + ATP = dTDP + ADP. Its function is as follows. Phosphorylation of dTMP to form dTDP in both de novo and salvage pathways of dTTP synthesis. The sequence is that of Thymidylate kinase from Pectobacterium carotovorum subsp. carotovorum (strain PC1).